A 103-amino-acid chain; its full sequence is MQNQRIRIRLKGFDHRLIDQSTAEIVETAKRTGAQVRGPIPLPTRKERFTILTSPHVNKDARDQYELRTHKRLVDIVEPTEKTVDALMRLDLAAGVDVQISLG.

This sequence belongs to the universal ribosomal protein uS10 family. As to quaternary structure, part of the 30S ribosomal subunit.

In terms of biological role, involved in the binding of tRNA to the ribosomes. This Shewanella halifaxensis (strain HAW-EB4) protein is Small ribosomal subunit protein uS10.